A 225-amino-acid chain; its full sequence is Uracil-DNA glycosylase (225 aa).

Asp-68 acts as the Proton acceptor in catalysis.

The protein belongs to the uracil-DNA glycosylase (UDG) superfamily. UNG family.

It localises to the cytoplasm. It catalyses the reaction Hydrolyzes single-stranded DNA or mismatched double-stranded DNA and polynucleotides, releasing free uracil.. Functionally, excises uracil residues from the DNA which can arise as a result of misincorporation of dUMP residues by DNA polymerase or due to deamination of cytosine. The sequence is that of Uracil-DNA glycosylase from Parafrankia sp. (strain EAN1pec).